The primary structure comprises 222 residues: Hexitol phosphatase B (222 aa).

The Nucleophile role is filled by aspartate 13. Residues aspartate 13 and aspartate 15 each coordinate a divalent metal cation. Substrate contacts are provided by residues 13-15, 115-116, and lysine 148; these read DMD and SA. Residue aspartate 15 is the Proton donor of the active site. Aspartate 173 lines the a divalent metal cation pocket.

This sequence belongs to the HAD-like hydrolase superfamily. CbbY/CbbZ/Gph/YieH family. The cofactor is Mg(2+). Mn(2+) serves as cofactor. Co(2+) is required as a cofactor. It depends on Zn(2+) as a cofactor.

The catalysed reaction is sugar phosphate + H2O = sugar + phosphate.. The enzyme catalyses 2-deoxy-D-glucose 6-phosphate + H2O = 2-deoxy-D-glucose + phosphate. It catalyses the reaction D-mannitol 1-phosphate + H2O = D-mannitol + phosphate. It carries out the reaction D-sorbitol 6-phosphate + H2O = D-sorbitol + phosphate. Sugar-phosphate phosphohydrolase that catalyzes the dephosphorylation of D-mannitol 1-phosphate and D-sorbitol 6-phosphate. Also catalyzes the dephosphorylation of 2-deoxyglucose 6-phosphate (2dGlu6P); this is a biologically important activity in vivo since it contributes to the elimination of this toxic compound and plays an important role in the resistance of E.coli to 2-deoxyglucose. The polypeptide is Hexitol phosphatase B (Escherichia coli O157:H7).